We begin with the raw amino-acid sequence, 308 residues long: MTMENYSMAAQFVLDGLTQQAELQLPLFLLFLGIYVVTVVGNLGMILLIAVSPLLHTPMYYFLSSLSFVDFCYSSVITPKMLVNFLGKKNTILYSECMVQLFFFVVFVVAEGYLLTAMAYDRYVAICSPLLYNAIMSSWVCSLLVLAAFFLGFLSALTHTSAMMKLSFCKSHIINHYFCDVLPLLNLSCSNTHLNELLLFIIAGFNTLVPTLAVAVSYAFILYSILHIRSSEGRSKAFGTCSSHLMAVVIFFGSITFMYFKPPSSNSLDQEKVSSVFYTTVIPMLNPLIYSLRNKDVKKALRKVLVGK.

Topologically, residues 1-25 (MTMENYSMAAQFVLDGLTQQAELQL) are extracellular. Asn-5 is a glycosylation site (N-linked (GlcNAc...) asparagine). A helical membrane pass occupies residues 26–46 (PLFLLFLGIYVVTVVGNLGMI). Over 47-54 (LLIAVSPL) the chain is Cytoplasmic. A helical transmembrane segment spans residues 55-75 (LHTPMYYFLSSLSFVDFCYSS). At 76-99 (VITPKMLVNFLGKKNTILYSECMV) the chain is on the extracellular side. A disulfide bond links Cys-97 and Cys-189. Residues 100-120 (QLFFFVVFVVAEGYLLTAMAY) traverse the membrane as a helical segment. Over 121–139 (DRYVAICSPLLYNAIMSSW) the chain is Cytoplasmic. A helical membrane pass occupies residues 140–160 (VCSLLVLAAFFLGFLSALTHT). At 161 to 197 (SAMMKLSFCKSHIINHYFCDVLPLLNLSCSNTHLNEL) the chain is on the extracellular side. N-linked (GlcNAc...) asparagine glycosylation is present at Asn-186. The chain crosses the membrane as a helical span at residues 198–217 (LLFIIAGFNTLVPTLAVAVS). Over 218 to 237 (YAFILYSILHIRSSEGRSKA) the chain is Cytoplasmic. A helical transmembrane segment spans residues 238–258 (FGTCSSHLMAVVIFFGSITFM). The Extracellular portion of the chain corresponds to 259 to 271 (YFKPPSSNSLDQE). A helical membrane pass occupies residues 272–292 (KVSSVFYTTVIPMLNPLIYSL). The Cytoplasmic portion of the chain corresponds to 293-308 (RNKDVKKALRKVLVGK).

It belongs to the G-protein coupled receptor 1 family. In terms of tissue distribution, expressed in the tongue.

The protein resides in the cell membrane. In terms of biological role, odorant receptor (Potential). May be involved in taste perception. This is Olfactory receptor 8D1 (OR8D1) from Homo sapiens (Human).